The chain runs to 369 residues: Thyroid hormone receptor beta (369 aa).

Positions 1–14 (MSGYIPSYLDKDEL) are modulating. Residues C15, C18, C32, C35, C53, C59, C69, and C72 each coordinate Zn(2+). 2 NR C4-type zinc fingers span residues 15 to 35 (CVVC…CEGC) and 53 to 77 (CKYE…FKKC). A DNA-binding region (nuclear receptor) is located at residues 15-89 (CVVCGDKATG…VGMATDLVLD (75 aa)). The NR LBD domain occupies 125–369 (EEWELIKIVT…PPLFLEVFED (245 aa)). Residues R190, N239, and H343 each contribute to the 3,3',5-triiodo-L-thyronine site. 3 residues coordinate L-thyroxine: R190, N239, and H343.

The protein belongs to the nuclear hormone receptor family. NR1 subfamily.

The protein resides in the nucleus. Nuclear hormone receptor that can act as a repressor or activator of transcription. High affinity receptor for thyroid hormones, including triiodothyronine and thyroxine. The chain is Thyroid hormone receptor beta (THRB) from Cairina moschata (Muscovy duck).